The following is a 360-amino-acid chain: Phospho-N-acetylmuramoyl-pentapeptide-transferase (360 aa).

Transmembrane regions (helical) follow at residues 21–41 (YVTFRAILGLMTALMFSLWWG), 74–94 (MGGLLILAGIFISVLLWGDLG), 97–117 (YVWVVLFVLASFGTIGFIDDY), 135–155 (LLQSIAAIVIAVYLYASADTA), 168–188 (VMPQLGAFFIVLVYFTIVGSS), 199–219 (GLAIMPTVMVAAAFALIAYLS), 236–256 (AGELVIVCTAIVGAGLGFLWF), 263–283 (VFMGDVGSLALGAALGAIAVL), 288–308 (ILLVIMGGVFVMETVSVILQV), and 338–358 (VIVRFWIISLFLVLLGLATLK).

The protein belongs to the glycosyltransferase 4 family. MraY subfamily. Requires Mg(2+) as cofactor.

Its subcellular location is the cell inner membrane. The catalysed reaction is UDP-N-acetyl-alpha-D-muramoyl-L-alanyl-gamma-D-glutamyl-meso-2,6-diaminopimeloyl-D-alanyl-D-alanine + di-trans,octa-cis-undecaprenyl phosphate = di-trans,octa-cis-undecaprenyl diphospho-N-acetyl-alpha-D-muramoyl-L-alanyl-D-glutamyl-meso-2,6-diaminopimeloyl-D-alanyl-D-alanine + UMP. It participates in cell wall biogenesis; peptidoglycan biosynthesis. Catalyzes the initial step of the lipid cycle reactions in the biosynthesis of the cell wall peptidoglycan: transfers peptidoglycan precursor phospho-MurNAc-pentapeptide from UDP-MurNAc-pentapeptide onto the lipid carrier undecaprenyl phosphate, yielding undecaprenyl-pyrophosphoryl-MurNAc-pentapeptide, known as lipid I. This chain is Phospho-N-acetylmuramoyl-pentapeptide-transferase, found in Shewanella piezotolerans (strain WP3 / JCM 13877).